Reading from the N-terminus, the 326-residue chain is DNA repair protein XRCC4 (326 aa).

Residues 1–212 (MERKVSRIYL…QLEESTKPER (212 aa)) form an interaction with IFFO1 region. Ser53 carries the post-translational modification Phosphoserine; by PRKDC. 2 coiled-coil regions span residues 131–165 (LDTI…FEKC) and 185–209 (NEKK…ESTK). Residues 180–211 (FILVLNEKKTKIRSLHKLLNEVQQLEESTKPE) form an interaction with LIG4 region. Position 193 is a phosphoserine; by PRKDC (Ser193). The disordered stretch occupies residues 203–326 (QLEESTKPER…RNSSPEDLFD (124 aa)). Over residues 206–226 (ESTKPERENPCSDKTPEEHGL) the composition is skewed to basic and acidic residues. Tyr227 carries the post-translational modification Phosphotyrosine. Ser230 is subject to Phosphoserine. At Thr231 the chain carries Phosphothreonine. Position 235 is a phosphoserine (Ser235). Position 244 is a phosphothreonine (Thr244). Phosphoserine is present on Ser250. Ser254 carries the phosphoserine; by PRKDC modification. The Nuclear localization signal motif lies at 264–269 (RKRRHR). A Glycyl lysine isopeptide (Lys-Gly) (interchain with G-Cter in ubiquitin) cross-link involves residue Lys290. Ser295 is modified (phosphoserine; by PRKDC). At Ser296 the chain carries Phosphoserine. Ser307 and Ser312 each carry phosphoserine; by PRKDC. Residues 307–326 (SAENMSLETLRNSSPEDLFD) show a composition bias toward polar residues. Thr315 is subject to Phosphothreonine; by PRKDC. Residues Ser319 and Ser320 each carry the phosphoserine; by PRKDC modification.

It belongs to the XRCC4-XLF family. XRCC4 subfamily. As to quaternary structure, homodimer and homotetramer in solution. Interacts with NHEJ1/XLF; the interaction is direct and is mediated via a head-to-head interaction between N-terminal head regions. Interacts with LIG4; the LIG4-XRCC4 subcomplex has a 1:2 stoichiometry and XRCC4 is required for LIG4 stability. Component of the core long-range non-homologous end joining (NHEJ) complex (also named DNA-PK complex) composed of PRKDC, LIG4, XRCC4, XRCC6/Ku70, XRCC5/Ku86 and NHEJ1/XLF. Additional component of the NHEJ complex includes PAXX. Following autophosphorylation, PRKDC dissociates from DNA, leading to formation of the short-range NHEJ complex, composed of LIG4, XRCC4, XRCC6/Ku70, XRCC5/Ku86 and NHEJ1/XLF. Interacts with PRKDC; the interaction is direct. Interacts with XRCC6/Ku70; the interaction is direct. Interacts with APTX and APLF. Forms a heterotetramer with IFFO1; the interaction involves LIG4-free XRCC4 and leads to the relocalization of IFFO1 to the sites of DNA damage. Interacts with PNKP; mainly interacts with PNKP when phosphorylated at Thr-231, but is also able to interact at much lower level with PNKP when not unphosphorylated. Interacts with POLL (DNA polymerase lambda). In terms of assembly, interacts with XKR4; interacts with the processed form of XKR4, which is cleaved by caspase. Phosphorylated by PRKDC at the C-terminus in response to DNA damage; Ser-254 and Ser-312 constitute the main phosphorylation sites. Phosphorylation by PRKDC at the C-terminus of XRCC4 and NHEJ1/XLF are highly redundant and regulate ability of the XRCC4-NHEJ1/XLF subcomplex to bridge DNA. Phosphorylation by PRKDC does not prevent interaction with NHEJ1/XLF but disrupts ability to bridge DNA and promotes detachment from DNA. Phosphorylation at Ser-319 and Ser-320 by PRKDC promotes recognition by the SCF(FBXW7) complex and subsequent ubiquitination via 'Lys-63'-linked ubiquitin. Phosphorylation at Thr-231 by CK2 promotes interaction with PNKP; regulating PNKP activity and localization to DNA damage sites. Phosphorylation by CK2 promotes interaction with APTX. Post-translationally, ubiquitinated at Lys-290 by the SCF(FBXW7) complex via 'Lys-63'-linked ubiquitination, thereby promoting double-strand break repair: the SCF(FBXW7) complex specifically recognizes XRCC4 when phosphorylated at Ser-319 and Ser-320 by PRKDC, and 'Lys-63'-linked ubiquitination facilitates DNA non-homologous end joining (NHEJ) by enhancing association with XRCC5/Ku80 and XRCC6/Ku70. Monoubiquitinated. In terms of processing, undergoes proteolytic processing by caspase-3 (CASP3). This generates the protein XRCC4, C-terminus (XRCC4/C), which translocates to the cytoplasm and activates phospholipid scramblase activity of XKR4, thereby promoting phosphatidylserine exposure on apoptotic cell surface.

It is found in the nucleus. Its subcellular location is the chromosome. The protein resides in the cytoplasm. DNA non-homologous end joining (NHEJ) core factor, required for double-strand break repair and V(D)J recombination. Acts as a scaffold protein that regulates recruitment of other proteins to DNA double-strand breaks (DSBs). Associates with NHEJ1/XLF to form alternating helical filaments that bridge DNA and act like a bandage, holding together the broken DNA until it is repaired. The XRCC4-NHEJ1/XLF subcomplex binds to the DNA fragments of a DSB in a highly diffusive manner and robustly bridges two independent DNA molecules, holding the broken DNA fragments in close proximity to one other. The mobility of the bridges ensures that the ends remain accessible for further processing by other repair factors. Plays a key role in the NHEJ ligation step of the broken DNA during DSB repair via direct interaction with DNA ligase IV (LIG4): the LIG4-XRCC4 subcomplex reseals the DNA breaks after the gap filling is completed. XRCC4 stabilizes LIG4, regulates its subcellular localization and enhances LIG4's joining activity. Binding of the LIG4-XRCC4 subcomplex to DNA ends is dependent on the assembly of the DNA-dependent protein kinase complex DNA-PK to these DNA ends. Promotes displacement of PNKP from processed strand break termini. Functionally, acts as an activator of the phospholipid scramblase activity of XKR4. This form, which is generated upon caspase-3 (CASP3) cleavage, translocates into the cytoplasm and interacts with XKR4, thereby promoting phosphatidylserine scramblase activity of XKR4 and leading to phosphatidylserine exposure on apoptotic cell surface. This chain is DNA repair protein XRCC4, found in Mus musculus (Mouse).